Consider the following 440-residue polypeptide: Glycerophosphocholine cholinephosphodiesterase ENPP6 (440 aa).

Positions 1–22 (MAGKLWTFLLLFGFSWVWPASA) are cleaved as a signal peptide. 3 residues coordinate substrate: Asp-32, Ser-71, and Asn-92. Zn(2+)-binding residues include Asp-32 and Ser-71. The Nucleophile role is filled by Ser-71. Ser-71 is modified (phosphoserine). Residues Asn-100 and Asn-118 are each glycosylated (N-linked (GlcNAc...) asparagine). Cys-142 and Cys-154 are disulfide-bonded. Asp-193 provides a ligand contact to substrate. The Zn(2+) site is built by Asp-193, His-197, Asp-240, and His-241. His-241 is a binding site for substrate. The N-linked (GlcNAc...) asparagine glycan is linked to Asn-341. Residue His-354 coordinates substrate. Position 354 (His-354) interacts with Zn(2+). An N-linked (GlcNAc...) asparagine glycan is attached at Asn-404. The GPI-anchor amidated serine moiety is linked to residue Ser-419. A propeptide spans 420–440 (SSPSIPPNSCALVLILLLYFV) (removed in mature form).

The protein belongs to the nucleotide pyrophosphatase/phosphodiesterase family. In terms of assembly, homodimer; disulfide-linked. Homotetramer. The cofactor is Zn(2+).

It is found in the cell membrane. The enzyme catalyses sn-glycerol 3-phosphocholine + H2O = phosphocholine + glycerol + H(+). It catalyses the reaction a 1-acyl-sn-glycero-3-phosphocholine + H2O = a 1-acyl-sn-glycerol + phosphocholine + H(+). The catalysed reaction is a 1-O-alkyl-sn-glycero-3-phosphocholine + H2O = a 1-O-alkyl-sn-glycerol + phosphocholine + H(+). It carries out the reaction 1-dodecanoyl-sn-glycero-3-phosphocholine + H2O = 1-dodecanoyl-sn-glycerol + phosphocholine + H(+). The enzyme catalyses 1-hexadecanoyl-sn-glycero-3-phosphocholine + H2O = 1-hexadecanoyl-sn-glycerol + phosphocholine + H(+). It catalyses the reaction 1-(5Z,8Z,11Z,14Z-eicosatetraenoyl)-sn-glycero-3-phosphocholine + H2O = 1-(5Z,8Z,11Z,14Z-eicosatetraenoyl)-sn-glycerol + phosphocholine + H(+). The catalysed reaction is 1-tetradecanoyl-sn-glycero-3-phosphocholine + H2O = 1-tetradecanoyl-sn-glycerol + phosphocholine + H(+). It carries out the reaction sphing-4-enine-phosphocholine + H2O = sphing-4-enine + phosphocholine + H(+). The enzyme catalyses 1-(9Z-octadecenoyl)-sn-glycero-3-phosphocholine + H2O = 1-(9Z-octadecenoyl)-sn-glycerol + phosphocholine + H(+). It catalyses the reaction 1-(9Z,12Z)-octadecadienoyl-sn-glycero-3-phosphocholine + H2O = 1-(9Z,12Z-octadecadienoyl)-sn-glycerol + phosphocholine + H(+). The catalysed reaction is glycero-2-phosphocholine + H2O = phosphocholine + glycerol + H(+). Inhibited by EDTA and EGTA in vitro. Its function is as follows. Choline-specific glycerophosphodiesterase that hydrolyzes glycerophosphocholine (GPC) and lysophosphatidylcholine (LPC) and contributes to supplying choline to the cells. Has a preference for LPC with short (12:0 and 14:0) or polyunsaturated (18:2 and 20:4) fatty acids. In vitro, hydrolyzes only choline-containing lysophospholipids, such as sphingosylphosphorylcholine (SPC), platelet-activating factor (PAF) and lysoPAF, but not other lysophospholipids. The sequence is that of Glycerophosphocholine cholinephosphodiesterase ENPP6 from Rattus norvegicus (Rat).